A 350-amino-acid polypeptide reads, in one-letter code: Phosphotriesterase-related protein (350 aa).

Residues H22, H24, E169, H201, H230, and D298 each contribute to the a divalent metal cation site.

Belongs to the metallo-dependent hydrolases superfamily. Phosphotriesterase family. A divalent metal cation serves as cofactor.

The polypeptide is Phosphotriesterase-related protein (Drosophila willistoni (Fruit fly)).